Here is a 658-residue protein sequence, read N- to C-terminus: tRNA uridine 5-carboxymethylaminomethyl modification enzyme MnmG (658 aa).

Gly13–Gly18 lines the FAD pocket. Gly285–Phe299 is an NAD(+) binding site.

This sequence belongs to the MnmG family. Homodimer. Heterotetramer of two MnmE and two MnmG subunits. The cofactor is FAD.

It is found in the cytoplasm. Its function is as follows. NAD-binding protein involved in the addition of a carboxymethylaminomethyl (cmnm) group at the wobble position (U34) of certain tRNAs, forming tRNA-cmnm(5)s(2)U34. The chain is tRNA uridine 5-carboxymethylaminomethyl modification enzyme MnmG from Verminephrobacter eiseniae (strain EF01-2).